A 680-amino-acid chain; its full sequence is Tripartite terminase subunit 1 (680 aa).

A C3H1-type zinc finger spans residues 180–208 (CLECVLETSVVPNQGETLNELLLNHNCHH). 610-617 (YNITWEKN) provides a ligand contact to ATP.

This sequence belongs to the herpesviridae TRM1 protein family. Associates with TRM2 and TRM3 to form the tripartite terminase complex. Interacts with portal protein.

The protein localises to the host nucleus. Functionally, component of the molecular motor that translocates viral genomic DNA in empty capsid during DNA packaging. Forms a tripartite terminase complex together with TRM2 and TRM3 in the host cytoplasm. Once the complex reaches the host nucleus, it interacts with the capsid portal vertex. This portal forms a ring in which genomic DNA is translocated into the capsid. TRM1 carries an endonuclease activity that plays an important role for the cleavage of concatemeric viral DNA into unit length genomes. The sequence is that of Tripartite terminase subunit 1 from Alcelaphine herpesvirus 1 (strain C500) (AlHV-1).